We begin with the raw amino-acid sequence, 1299 residues long: Protein prickle (1299 aa).

Over residues methionine 1–glycine 19 the composition is skewed to gly residues. 5 disordered regions span residues methionine 1–alanine 24, alanine 115–glutamine 181, glutamate 241–proline 289, leucine 368–serine 396, and leucine 425–serine 527. The segment covering serine 145–histidine 159 has biased composition (basic residues). Residues asparagine 168 to glutamine 181 are compositionally biased toward polar residues. Pro residues predominate over residues proline 263 to alanine 272. Residues leucine 425–glycine 434 show a composition bias toward low complexity. Positions alanine 435–alanine 445 are enriched in gly residues. Residues proline 457–glutamine 469 show a composition bias toward polar residues. The PET domain maps to methionine 515–proline 623. The segment covering aspartate 516–aspartate 525 has biased composition (basic and acidic residues). 3 LIM zinc-binding domains span residues arginine 622 to lysine 686, proline 687 to glutamate 747, and tyrosine 748 to proline 810. Disordered regions lie at residues glycine 807–threonine 865, lysine 902–glutamine 940, and alanine 1026–serine 1249. Positions proline 844 to alanine 864 are enriched in low complexity. Composition is skewed to polar residues over residues arginine 922–asparagine 934 and serine 1070–serine 1081. Low complexity predominate over residues serine 1089–serine 1101. The segment covering glycine 1136–glycine 1150 has biased composition (basic and acidic residues). The span at arginine 1151–serine 1183 shows a compositional bias: basic residues. The span at serine 1216–glutamate 1231 shows a compositional bias: basic and acidic residues. Residues valine 1238 to serine 1249 show a composition bias toward low complexity.

Belongs to the prickle / espinas / testin family. As to quaternary structure, interacts with dsh; PET and LIM domains interact with dsh DEP domain, in wing cells. Interacts with Vang in photoreceptor cells. As to expression, expressed in the wing, leg and eye imaginal disks. Expressed within the photoreceptors of the eye.

The protein resides in the cell membrane. Its function is as follows. Acts in a planar cell polarity (PCP) complex; polarization along the apical/basal axis of epithelial cells. Correct expression of the alternative isoforms is required for PCP signaling in imaginal disks. PCP signaling in the wing disk requires the receptor fz and the cytoplasmic proteins dsh and pk. These act in a feedback loop leading to activation of the jnk cascade and subsequent polarized arrangement of hairs and bristles. Dgo and pk compete with one another for dsh binding, thereby modulating fz dsh activity and ensuring tight control over fz PCP signaling. Vang, stan and pk function together to regulate the establishment of tissue polarity in the adult eye. The protein is Protein prickle of Drosophila melanogaster (Fruit fly).